A 327-amino-acid chain; its full sequence is Transcription factor bHLH48 (327 aa).

Residues 137–179 (EPAETDSMVENQNQSYSSGKRKEREKKVKSSTKKNKSSVESDK) are disordered. A bHLH domain is found at 191–241 (QATDNHSLAERARREKINARMKLLQELVPGCDKIQGTALVLDEIINHVQTL).

In terms of assembly, homodimer. In terms of tissue distribution, expressed in leaves, stems, and flowers.

The protein localises to the nucleus. The polypeptide is Transcription factor bHLH48 (BHLH48) (Arabidopsis thaliana (Mouse-ear cress)).